A 562-amino-acid chain; its full sequence is Lamassu protein LmuB (562 aa).

Functionally, component of antiviral defense system Lamassu type I, composed of LmuA and LmuB. Expression of Lamassu type I in B.subtilis (strain BEST7003) confers resistance to phages phi3T, SpBeta and SPR. May be an ATPase. This Bacillus sp. (strain NCIM 5461 / CCTCC AB 2011126 / NIO-1130) protein is Lamassu protein LmuB.